Consider the following 716-residue polypeptide: Inhibitor of nuclear factor kappa-B kinase subunit epsilon (716 aa).

In terms of domain architecture, Protein kinase spans Trp9–Ser315. Residue Leu15–Val23 coordinates ATP. Lys30 is covalently cross-linked (Glycyl lysine isopeptide (Lys-Gly) (interchain with G-Cter in ubiquitin)). Lys38 serves as a coordination point for ATP. The active-site Proton acceptor is Asp135. The residue at position 172 (Ser172) is a Phosphoserine; by autocatalysis and IKKB. A Glycyl lysine isopeptide (Lys-Gly) (interchain with G-Cter in SUMO1) cross-link involves residue Lys231. Residues Ser383–Glu647 form an interaction with DDX3X region. Residue Lys401 forms a Glycyl lysine isopeptide (Lys-Gly) (interchain with G-Cter in ubiquitin) linkage. The leucine-zipper stretch occupies residues Gln436–Thr457. Phosphothreonine is present on Thr501. Ser664 carries the phosphoserine modification.

This sequence belongs to the protein kinase superfamily. Ser/Thr protein kinase family. I-kappa-B kinase subfamily. Homodimer. Interacts with MAVS/IPS1. Interacts (via protein kinase domain) with TTLL12 (via N-terminus); the interaction prevents MAVS binding to IKBKE. Interacts with the adapter proteins AZI2/NAP1, TANK and TBKBP1/SINTBAD. Interacts with SIKE1. Interacts with TICAM1/TRIF, IRF3 and RIGI; interactions are disrupted by the interaction between IKBKE and SIKE1. Interacts with TOPORS; induced by DNA damage. Interacts with CYLD. Interacts (when polyubiquitinated) with IKBKB, IKBKG and MYD88. Interacts with IFIH1. Interacts with DDX3X; the interaction may be induced upon virus infection. Interacts with TRIM6 (via SPRY box). Interacts with unanchored K48-linked polyubiquitin chains; this leads to IKBKE activation. Interacts with TBK1. Interacts with FKBP5. In terms of assembly, (Microbial infection) Interacts (via Protein kinase domain) with arenavirus protein N; the interaction inhibits IKBKE kinase function. As to quaternary structure, (Microbial infection) Interacts with Ebola virus protein VP35; the interaction leads to inhibition of cellular antiviral response by blocking necessary interactions between the IKBKE and MAVS/IPS as well as its substrates IRF3 and IRF7. (Microbial infection) Interacts with Severe fever with thrombocytopenia virus (SFTSV) NSs; this interaction this interaction sequesters IKBKE in NSs-induced cytoplasmic inclusion bodies thereby inhibiting the IFN responses. In terms of assembly, (Microbial infection) Interacts with human T-cell leukemia virus 1/HTLV-1 protein HBZ. As to quaternary structure, (Microbial infection) Interacts with Epstein-Barr virus (EBV) protein NEC2/BFRF1; this interaction inhibits IKBKE kinase activity and IRF3 nuclear translocation. Autophosphorylated and phosphorylated by IKBKB/IKKB. Phosphorylation at Ser-172 is enhanced by the interaction with DDX3X. Phosphorylated at Thr-501 upon IFN activation. In terms of processing, sumoylation by TOPORS upon DNA damage is required for protection of cells against DNA damage-induced cell death. Desumoylated by SENP1. Post-translationally, 'Lys-63'-linked polyubiquitinated at Lys-30 and Lys-401 by TRAF2:BIRC2 and TRAF2:BIRC3 complexes. Ubiquitination is induced by LPS, TNFA and interleukin-1 and required for full kinase activity and KF-kappa-B pathway activation. Highly expressed in spleen followed by thymus, peripheral blood leukocytes, pancreas, placenta. Weakly expressed in lung, kidney, prostate, ovary and colon.

It is found in the cytoplasm. The protein resides in the nucleus. The protein localises to the PML body. The catalysed reaction is L-seryl-[I-kappa-B protein] + ATP = O-phospho-L-seryl-[I-kappa-B protein] + ADP + H(+). Serine/threonine kinase that plays an essential role in regulating inflammatory responses to viral infection, through the activation of the type I IFN, NF-kappa-B and STAT signaling. Also involved in TNFA and inflammatory cytokines, like Interleukin-1, signaling. Following activation of viral RNA sensors, such as RIG-I-like receptors, associates with DDX3X and phosphorylates interferon regulatory factors (IRFs), IRF3 and IRF7, as well as DDX3X. This activity allows subsequent homodimerization and nuclear translocation of the IRF3 leading to transcriptional activation of pro-inflammatory and antiviral genes including IFNB. In order to establish such an antiviral state, IKBKE forms several different complexes whose composition depends on the type of cell and cellular stimuli. Thus, several scaffolding molecules including IPS1/MAVS, TANK, AZI2/NAP1 or TBKBP1/SINTBAD can be recruited to the IKBKE-containing-complexes. Activated by polyubiquitination in response to TNFA and interleukin-1, regulates the NF-kappa-B signaling pathway through, at least, the phosphorylation of CYLD. Phosphorylates inhibitors of NF-kappa-B thus leading to the dissociation of the inhibitor/NF-kappa-B complex and ultimately the degradation of the inhibitor. In addition, is also required for the induction of a subset of ISGs which displays antiviral activity, may be through the phosphorylation of STAT1 at 'Ser-708'. Phosphorylation of STAT1 at 'Ser-708' also seems to promote the assembly and DNA binding of ISGF3 (STAT1:STAT2:IRF9) complexes compared to GAF (STAT1:STAT1) complexes, in this way regulating the balance between type I and type II IFN responses. Protects cells against DNA damage-induced cell death. Also plays an important role in energy balance regulation by sustaining a state of chronic, low-grade inflammation in obesity, wich leads to a negative impact on insulin sensitivity. Phosphorylates AKT1. The chain is Inhibitor of nuclear factor kappa-B kinase subunit epsilon (IKBKE) from Homo sapiens (Human).